The following is a 124-amino-acid chain: Ragulator complex protein LAMTOR3 (124 aa).

Positions 57–70 (TDQGSKLGLSKNKS) are required for interaction with LAMTOR2.

It belongs to the LAMTOR3 family. In terms of assembly, part of the Ragulator complex composed of LAMTOR1, LAMTOR2, LAMTOR3, LAMTOR4 and LAMTOR5. LAMTOR4 and LAMTOR5 form a heterodimer that interacts, through LAMTOR1, with a LAMTOR2, LAMTOR3 heterodimer. Interacts with LAMTOR1 and LAMTOR2; the interaction is direct. The Ragulator complex interacts with both the mTORC1 complex and heterodimers constituted of the Rag GTPases RagA/RRAGA, RagB/RRAGB, RagC/RRAGC and RagD/RRAGD; regulated by amino acid availability. The Ragulator complex interacts with SLC38A9; the probable amino acid sensor. Component of the lysosomal folliculin complex (LFC), composed of FLCN, FNIP1 (or FNIP2), RagA/RRAGA or RagB/RRAGB GDP-bound, RagC/RRAGC or RagD/RRAGD GTP-bound, and Ragulator. Interacts with MAP2K1/MEK1 and MAPK2. Interacts with MORG1.

The protein resides in the late endosome membrane. In terms of biological role, as part of the Ragulator complex it is involved in amino acid sensing and activation of mTORC1, a signaling complex promoting cell growth in response to growth factors, energy levels, and amino acids. Activated by amino acids through a mechanism involving the lysosomal V-ATPase, the Ragulator plays a dual role for the small GTPases Rag (RagA/RRAGA, RagB/RRAGB, RagC/RRAGC and/or RagD/RRAGD): it (1) acts as a guanine nucleotide exchange factor (GEF), activating the small GTPases Rag and (2) mediates recruitment of Rag GTPases to the lysosome membrane. Activated Ragulator and Rag GTPases function as a scaffold recruiting mTORC1 to lysosomes where it is in turn activated. Adapter protein that enhances the efficiency of the MAP kinase cascade facilitating the activation of MAPK2. This Homo sapiens (Human) protein is Ragulator complex protein LAMTOR3.